The following is a 412-amino-acid chain: [Pyruvate dehydrogenase (acetyl-transferring)] kinase isozyme 4, mitochondrial (412 aa).

The region spanning 138-368 is the Histidine kinase domain; that stretch reads IIEYKDSCTV…DAIIYLKALS (231 aa). ATP contacts are provided by residues 254–261, D293, 312–313, and 329–334; these read ELFKNAMR, ST, and GFGYGL.

It belongs to the PDK/BCKDK protein kinase family. As to quaternary structure, homodimer. Interacts with the pyruvate dehydrogenase complex subunit DLAT, and is part of the multimeric pyruvate dehydrogenase complex that contains multiple copies of pyruvate dehydrogenase (E1), dihydrolipoamide acetyltransferase (DLAT, E2) and lipoamide dehydrogenase (DLD, E3). As to expression, detected in heart, white adipose tissue and muscle.

Its subcellular location is the mitochondrion matrix. The catalysed reaction is L-seryl-[pyruvate dehydrogenase E1 alpha subunit] + ATP = O-phospho-L-seryl-[pyruvate dehydrogenase E1 alpha subunit] + ADP + H(+). Functionally, kinase that plays a key role in regulation of glucose and fatty acid metabolism and homeostasis via phosphorylation of the pyruvate dehydrogenase subunits PDHA1 and PDHA2. This inhibits pyruvate dehydrogenase activity, and thereby regulates metabolite flux through the tricarboxylic acid cycle, down-regulates aerobic respiration and inhibits the formation of acetyl-coenzyme A from pyruvate. Inhibition of pyruvate dehydrogenase decreases glucose utilization and increases fat metabolism in response to prolonged fasting and starvation. Plays an important role in maintaining normal blood glucose levels under starvation, and is involved in the insulin signaling cascade. Via its regulation of pyruvate dehydrogenase activity, plays an important role in maintaining normal blood pH and in preventing the accumulation of ketone bodies under starvation. In the fed state, mediates cellular responses to glucose levels and to a high-fat diet. Regulates both fatty acid oxidation and de novo fatty acid biosynthesis. Plays a role in the generation of reactive oxygen species. Protects detached epithelial cells against anoikis. Plays a role in cell proliferation via its role in regulating carbohydrate and fatty acid metabolism. The chain is [Pyruvate dehydrogenase (acetyl-transferring)] kinase isozyme 4, mitochondrial (PDK4) from Rhinolophus ferrumequinum (Greater horseshoe bat).